Consider the following 959-residue polypeptide: Isoleucine--tRNA ligase (959 aa).

Residues 60-70 (PYANGSLHMGH) carry the 'HIGH' region motif. E569 contacts L-isoleucyl-5'-AMP. The short motif at 610–614 (KMSKS) is the 'KMSKS' region element. An ATP-binding site is contributed by K613. Zn(2+) contacts are provided by C928, C931, C948, and C951.

This sequence belongs to the class-I aminoacyl-tRNA synthetase family. IleS type 1 subfamily. As to quaternary structure, monomer. Zn(2+) serves as cofactor.

Its subcellular location is the cytoplasm. The catalysed reaction is tRNA(Ile) + L-isoleucine + ATP = L-isoleucyl-tRNA(Ile) + AMP + diphosphate. Catalyzes the attachment of isoleucine to tRNA(Ile). As IleRS can inadvertently accommodate and process structurally similar amino acids such as valine, to avoid such errors it has two additional distinct tRNA(Ile)-dependent editing activities. One activity is designated as 'pretransfer' editing and involves the hydrolysis of activated Val-AMP. The other activity is designated 'posttransfer' editing and involves deacylation of mischarged Val-tRNA(Ile). In Crocosphaera subtropica (strain ATCC 51142 / BH68) (Cyanothece sp. (strain ATCC 51142)), this protein is Isoleucine--tRNA ligase.